A 373-amino-acid polypeptide reads, in one-letter code: Glutamate 5-kinase (373 aa).

ATP is bound at residue K16. Substrate is bound by residues S56, D143, and N155. 175–176 (TD) is a binding site for ATP. One can recognise a PUA domain in the interval 281–359 (RGVVTLDDGA…TKIETLLGYK (79 aa)).

The protein belongs to the glutamate 5-kinase family.

Its subcellular location is the cytoplasm. It carries out the reaction L-glutamate + ATP = L-glutamyl 5-phosphate + ADP. It participates in amino-acid biosynthesis; L-proline biosynthesis; L-glutamate 5-semialdehyde from L-glutamate: step 1/2. Its function is as follows. Catalyzes the transfer of a phosphate group to glutamate to form L-glutamate 5-phosphate. The chain is Glutamate 5-kinase from Teredinibacter turnerae (strain ATCC 39867 / T7901).